The primary structure comprises 358 residues: Sulfate/thiosulfate import ATP-binding protein CysA 1 (358 aa).

Residues 3-237 (IQVENIRKAF…PASAFVYGFL (235 aa)) enclose the ABC transporter domain. 35–42 (GPSGCGKT) lines the ATP pocket.

The protein belongs to the ABC transporter superfamily. Sulfate/tungstate importer (TC 3.A.1.6) family. In terms of assembly, the complex is composed of two ATP-binding proteins (CysA), two transmembrane proteins (CysT and CysW) and a solute-binding protein (CysP).

It localises to the cell inner membrane. It catalyses the reaction sulfate(out) + ATP + H2O = sulfate(in) + ADP + phosphate + H(+). It carries out the reaction thiosulfate(out) + ATP + H2O = thiosulfate(in) + ADP + phosphate + H(+). In terms of biological role, part of the ABC transporter complex CysAWTP involved in sulfate/thiosulfate import. Responsible for energy coupling to the transport system. The polypeptide is Sulfate/thiosulfate import ATP-binding protein CysA 1 (Chromobacterium violaceum (strain ATCC 12472 / DSM 30191 / JCM 1249 / CCUG 213 / NBRC 12614 / NCIMB 9131 / NCTC 9757 / MK)).